A 211-amino-acid polypeptide reads, in one-letter code: Transcriptional regulator NarO (211 aa).

The HTH bat-type domain maps to 154–205 (LTARQREVLETAHEMGYFEHPREANATEVAAALDINRSTFTEHLSAAQSKLL).

Activates transcription of the denitrifying genes (nitrate reductase narA and nitrite reductase nirK) under anaerobic conditions. The sequence is that of Transcriptional regulator NarO from Haloferax volcanii (strain ATCC 29605 / DSM 3757 / JCM 8879 / NBRC 14742 / NCIMB 2012 / VKM B-1768 / DS2) (Halobacterium volcanii).